Consider the following 401-residue polypeptide: 3-hydroxyisobutyryl-CoA hydrolase-like protein 1, mitochondrial (401 aa).

The N-terminal 26 residues, M1–C26, are a transit peptide targeting the mitochondrion.

Belongs to the enoyl-CoA hydratase/isomerase family.

Its subcellular location is the mitochondrion. This Arabidopsis thaliana (Mouse-ear cress) protein is 3-hydroxyisobutyryl-CoA hydrolase-like protein 1, mitochondrial.